The primary structure comprises 255 residues: Very-long-chain (3R)-3-hydroxyacyl-CoA dehydratase 2 (255 aa).

Topologically, residues 3-42 (AAAAATAAAKGNGGGGGRAGAGDASGTRKKKGPGPLATAY) are cytoplasmic. The interval 11 to 34 (AKGNGGGGGRAGAGDASGTRKKKG) is disordered. Over residues 13 to 22 (GNGGGGGRAG) the composition is skewed to gly residues. Residues 43–61 (LVIYNVVMTAGWLVIAVGL) form a helical membrane-spanning segment. The Lumenal portion of the chain corresponds to 62–80 (VRAYLAKGSYHSLYYSIEK). The helical transmembrane segment at 81-98 (PLKFFQTGALLEILHCAI) threads the bilayer. Residues 99–108 (GIVPSSVVLT) lie on the Cytoplasmic side of the membrane. The chain crosses the membrane as a helical span at residues 109 to 126 (SFQVMSRVFLIWAVTHSV). Over 127–131 (KEVQS) the chain is Lumenal. Residues 132–147 (EDSVLLFVIAWTITEI) form a helical membrane-spanning segment. Topologically, residues 148–170 (IRYSFYTFSLLNHLPYLIKWARY) are cytoplasmic. A helical transmembrane segment spans residues 171-188 (TLFIVLYPMGVSGELLTI). Active-site residues include Tyr-177 and Glu-184. At 189–218 (YAALPFVRQAGLYSISLPNKYNFSFDYYAF) the chain is on the lumenal side. The interval 199–215 (GLYSISLPNKYNFSFDY) is may be involved in interaction with TECR. The N-linked (GlcNAc...) asparagine glycan is linked to Asn-210. Residues 219-236 (LILIMISYIPIFPQLYFH) traverse the membrane as a helical segment. Residues 237–255 (MIHQRRKILSHTEEHKKFE) are Cytoplasmic-facing.

This sequence belongs to the very long-chain fatty acids dehydratase HACD family. May interact with enzymes of the ELO family (including ELOVL1); with those enzymes that mediate condensation, the first of the four steps of the reaction cycle responsible for fatty acids elongation, may be part of a larger fatty acids elongase complex. Interacts with BCAP31. Interacts (via the third lumenal loop) with TECR.

The protein localises to the endoplasmic reticulum membrane. It catalyses the reaction a very-long-chain (3R)-3-hydroxyacyl-CoA = a very-long-chain (2E)-enoyl-CoA + H2O. The enzyme catalyses (3R)-hydroxyhexadecanoyl-CoA = (2E)-hexadecenoyl-CoA + H2O. The catalysed reaction is (3R)-hydroxyoctadecanoyl-CoA = (2E)-octadecenoyl-CoA + H2O. It carries out the reaction (3R)-hydroxyeicosanoyl-CoA = (2E)-eicosenoyl-CoA + H2O. It catalyses the reaction (3R)-hydroxydocosanoyl-CoA = (2E)-docosenoyl-CoA + H2O. The enzyme catalyses (3R)-hydroxytetracosanoyl-CoA = (2E)-tetracosenoyl-CoA + H2O. The catalysed reaction is (3R)-hydroxyhexacosanoyl-CoA = (2E)-hexacosenoyl-CoA + H2O. It functions in the pathway lipid metabolism; fatty acid biosynthesis. Its function is as follows. Catalyzes the third of the very long-chain fatty acids (VLCFA) elongation four-step cycle (condensation, reduction, dehydration, and reduction). This endoplasmic reticulum-elongation process is characterized by the addition of two carbons to the lipid chain through each cycle. This enzyme catalyzes the dehydration of the 3-hydroxyacyl-CoA intermediate into trans-2,3-enoyl-CoA, within each cycle of elongation. Therefore, it participates in the production of various VLCFAs involved in multiple biological processes as precursors of membrane lipids and lipid mediators. The polypeptide is Very-long-chain (3R)-3-hydroxyacyl-CoA dehydratase 2 (Pongo abelii (Sumatran orangutan)).